Consider the following 940-residue polypeptide: Isoleucine--tRNA ligase (940 aa).

The 'HIGH' region motif lies at 58–68; it reads PYANGSIHIGH. Position 564 (Glu564) interacts with L-isoleucyl-5'-AMP. The 'KMSKS' region signature appears at 605-609; sequence KMSKS. Lys608 contributes to the ATP binding site. Zn(2+) contacts are provided by Cys903, Cys906, Cys923, and Cys926.

It belongs to the class-I aminoacyl-tRNA synthetase family. IleS type 1 subfamily. In terms of assembly, monomer. Zn(2+) serves as cofactor.

The protein localises to the cytoplasm. It carries out the reaction tRNA(Ile) + L-isoleucine + ATP = L-isoleucyl-tRNA(Ile) + AMP + diphosphate. Functionally, catalyzes the attachment of isoleucine to tRNA(Ile). As IleRS can inadvertently accommodate and process structurally similar amino acids such as valine, to avoid such errors it has two additional distinct tRNA(Ile)-dependent editing activities. One activity is designated as 'pretransfer' editing and involves the hydrolysis of activated Val-AMP. The other activity is designated 'posttransfer' editing and involves deacylation of mischarged Val-tRNA(Ile). In Shewanella oneidensis (strain ATCC 700550 / JCM 31522 / CIP 106686 / LMG 19005 / NCIMB 14063 / MR-1), this protein is Isoleucine--tRNA ligase.